The sequence spans 351 residues: Fe(3+) ions import ATP-binding protein FbpC (351 aa).

Positions 9-239 (LVLKNINKTF…PNSLFLANFM (231 aa)) constitute an ABC transporter domain. 41–48 (GPSGCGKT) lines the ATP pocket.

The protein belongs to the ABC transporter superfamily. Fe(3+) ion importer (TC 3.A.1.10) family. The complex is composed of two ATP-binding proteins (FbpC), two transmembrane proteins (FbpB) and a solute-binding protein (FbpA).

The protein resides in the cell inner membrane. The enzyme catalyses Fe(3+)(out) + ATP + H2O = Fe(3+)(in) + ADP + phosphate + H(+). Part of the ABC transporter complex FbpABC involved in Fe(3+) ions import. Responsible for energy coupling to the transport system. This chain is Fe(3+) ions import ATP-binding protein FbpC, found in Mannheimia succiniciproducens (strain KCTC 0769BP / MBEL55E).